We begin with the raw amino-acid sequence, 217 residues long: Uracil-DNA glycosylase (217 aa).

The active-site Proton acceptor is the D62.

The protein belongs to the uracil-DNA glycosylase (UDG) superfamily. UNG family.

Its subcellular location is the cytoplasm. It catalyses the reaction Hydrolyzes single-stranded DNA or mismatched double-stranded DNA and polynucleotides, releasing free uracil.. Excises uracil residues from the DNA which can arise as a result of misincorporation of dUMP residues by DNA polymerase or due to deamination of cytosine. This chain is Uracil-DNA glycosylase, found in Streptococcus mutans serotype c (strain ATCC 700610 / UA159).